A 133-amino-acid chain; its full sequence is Napin-1 (133 aa).

Propeptides lie at residues 31 to 49 and 131 to 133; these read PSWT…EKQG and PSY.

The protein belongs to the 2S seed storage albumins family. The mature protein consists of a small and a large chain linked by disulfide bonds. As to expression, cotyledons and the axis.

The small, basic, water-soluble napins are one of the two major kinds of storage proteins synthesized in the seed during its maturation. The sequence is that of Napin-1 from Brassica napus (Rape).